The primary structure comprises 539 residues: Chaperonin GroEL (539 aa).

ATP contacts are provided by residues 29–32 (TLGP), 86–90 (DGTTT), Gly-413, and Asp-494.

Belongs to the chaperonin (HSP60) family. As to quaternary structure, forms a cylinder of 14 subunits composed of two heptameric rings stacked back-to-back. Interacts with the co-chaperonin GroES.

It is found in the cytoplasm. It catalyses the reaction ATP + H2O + a folded polypeptide = ADP + phosphate + an unfolded polypeptide.. Functionally, together with its co-chaperonin GroES, plays an essential role in assisting protein folding. The GroEL-GroES system forms a nano-cage that allows encapsulation of the non-native substrate proteins and provides a physical environment optimized to promote and accelerate protein folding. The protein is Chaperonin GroEL of Finegoldia magna (strain ATCC 29328 / DSM 20472 / WAL 2508) (Peptostreptococcus magnus).